The primary structure comprises 539 residues: Chaperonin GroEL (539 aa).

Residues 30–33 (TLGP), 87–91 (DGTTT), G414, 479–481 (DAL), and D495 contribute to the ATP site.

It belongs to the chaperonin (HSP60) family. As to quaternary structure, forms a cylinder of 14 subunits composed of two heptameric rings stacked back-to-back. Interacts with the co-chaperonin GroES.

Its subcellular location is the cytoplasm. The enzyme catalyses ATP + H2O + a folded polypeptide = ADP + phosphate + an unfolded polypeptide.. In terms of biological role, together with its co-chaperonin GroES, plays an essential role in assisting protein folding. The GroEL-GroES system forms a nano-cage that allows encapsulation of the non-native substrate proteins and provides a physical environment optimized to promote and accelerate protein folding. The chain is Chaperonin GroEL from Caldicellulosiruptor saccharolyticus (strain ATCC 43494 / DSM 8903 / Tp8T 6331).